We begin with the raw amino-acid sequence, 130 residues long: Small ribosomal subunit protein uS11 (130 aa).

Belongs to the universal ribosomal protein uS11 family. As to quaternary structure, part of the 30S ribosomal subunit. Interacts with proteins S7 and S18. Binds to IF-3.

Functionally, located on the platform of the 30S subunit, it bridges several disparate RNA helices of the 16S rRNA. Forms part of the Shine-Dalgarno cleft in the 70S ribosome. The polypeptide is Small ribosomal subunit protein uS11 (Prochlorococcus marinus (strain AS9601)).